The sequence spans 245 residues: Purine nucleoside phosphorylase (245 aa).

An a purine D-ribonucleoside-binding site is contributed by histidine 7. Residues 23–27 (GDPGR), arginine 45, and 88–91 (RAGS) each bind phosphate. 183–184 (ME) is a binding site for a purine D-ribonucleoside. Aspartate 206 functions as the Proton donor in the catalytic mechanism.

The protein belongs to the PNP/MTAP phosphorylase family. Homohexamer; trimer of homodimers.

The enzyme catalyses inosine + phosphate = alpha-D-ribose 1-phosphate + hypoxanthine. It catalyses the reaction guanosine + phosphate = alpha-D-ribose 1-phosphate + guanine. It carries out the reaction 2'-deoxyguanosine + phosphate = 2-deoxy-alpha-D-ribose 1-phosphate + guanine. The catalysed reaction is 2'-deoxyinosine + phosphate = 2-deoxy-alpha-D-ribose 1-phosphate + hypoxanthine. The enzyme catalyses S-methyl-5'-thioinosine + phosphate = 5-(methylsulfanyl)-alpha-D-ribose 1-phosphate + hypoxanthine. It participates in purine metabolism; purine nucleoside salvage. With respect to regulation, inhibited by Immucillin-H and 5'-methylthio-Immucillin-H. Inhibited by 5'-deaza-1'-aza-2c-deoxy-1'-(9-methylene)-Immucilin-G (DADMe-ImmG). Functionally, as part of the purine salvage pathway, catalyzes the phosphorolytic breakdown of the N-glycosidic bond in the beta-(deoxy)ribonucleoside molecules, with the formation of the corresponding free purine bases and pentose-1-phosphate. Preferentially acts on inosine and guanosine, and to a lesser extent on 2'-deoxyguanosine and guanosine. Also catalyzes the phosphorylation of S-methyl-5'-thioinosine (MTI) to hypoxanthine; MTI is produced by adenosine deaminase (ADA)-mediated breakdown of S-methyl-5'-thioadenosine (MTA), a major by-product of polyamine biosynthesis. Generates hypoxanthine from both the purine salvage pathway and from polyamine metabolism which is required for nucleic acids synthesis. Has no activity towards adenosine. This chain is Purine nucleoside phosphorylase, found in Plasmodium falciparum (isolate 3D7).